The primary structure comprises 117 residues: G antigen 12B/C/D/E (117 aa).

The interval 1-117 is disordered; the sequence is MSWRGRSTYY…PEEGEKQSQC (117 aa). Composition is skewed to acidic residues over residues 32 to 45 and 87 to 96; these read FSDEVEPATPEEGE and ECEDGPDGQE. Residues 103–117 are compositionally biased toward basic and acidic residues; that stretch reads EEVKTPEEGEKQSQC.

The protein belongs to the GAGE family.

In Homo sapiens (Human), this protein is G antigen 12B/C/D/E (GAGE12B).